Consider the following 300-residue polypeptide: NAD kinase (300 aa).

Aspartate 75 functions as the Proton acceptor in the catalytic mechanism. NAD(+) is bound by residues 75–76 (DG), 149–150 (ND), arginine 177, aspartate 179, 190–195 (TAYALS), alanine 214, and glutamine 248.

This sequence belongs to the NAD kinase family. A divalent metal cation is required as a cofactor.

It is found in the cytoplasm. The catalysed reaction is NAD(+) + ATP = ADP + NADP(+) + H(+). Involved in the regulation of the intracellular balance of NAD and NADP, and is a key enzyme in the biosynthesis of NADP. Catalyzes specifically the phosphorylation on 2'-hydroxyl of the adenosine moiety of NAD to yield NADP. The chain is NAD kinase from Paraburkholderia phymatum (strain DSM 17167 / CIP 108236 / LMG 21445 / STM815) (Burkholderia phymatum).